A 114-amino-acid polypeptide reads, in one-letter code: Large ribosomal subunit protein bL19 (114 aa).

It belongs to the bacterial ribosomal protein bL19 family.

This protein is located at the 30S-50S ribosomal subunit interface and may play a role in the structure and function of the aminoacyl-tRNA binding site. This Desulfatibacillum aliphaticivorans protein is Large ribosomal subunit protein bL19.